The chain runs to 873 residues: DNA mismatch repair protein MutS (873 aa).

628–635 (GPNMAGKS) is a binding site for ATP.

The protein belongs to the DNA mismatch repair MutS family.

Functionally, this protein is involved in the repair of mismatches in DNA. It is possible that it carries out the mismatch recognition step. This protein has a weak ATPase activity. The sequence is that of DNA mismatch repair protein MutS from Chlorobium chlorochromatii (strain CaD3).